The chain runs to 352 residues: Probable dual-specificity RNA methyltransferase RlmN (352 aa).

The active-site Proton acceptor is glutamate 99. Residues 105-339 (TKSRTTACVS…VTVRRSRGKD (235 aa)) form the Radical SAM core domain. A disulfide bridge connects residues cysteine 112 and cysteine 344. Residues cysteine 119, cysteine 123, and cysteine 126 each contribute to the [4Fe-4S] cluster site. S-adenosyl-L-methionine-binding positions include 170 to 171 (GE), serine 202, 225 to 227 (SLH), and asparagine 301. Cysteine 344 serves as the catalytic S-methylcysteine intermediate.

Belongs to the radical SAM superfamily. RlmN family. [4Fe-4S] cluster serves as cofactor.

The protein localises to the cytoplasm. It catalyses the reaction adenosine(2503) in 23S rRNA + 2 reduced [2Fe-2S]-[ferredoxin] + 2 S-adenosyl-L-methionine = 2-methyladenosine(2503) in 23S rRNA + 5'-deoxyadenosine + L-methionine + 2 oxidized [2Fe-2S]-[ferredoxin] + S-adenosyl-L-homocysteine. It carries out the reaction adenosine(37) in tRNA + 2 reduced [2Fe-2S]-[ferredoxin] + 2 S-adenosyl-L-methionine = 2-methyladenosine(37) in tRNA + 5'-deoxyadenosine + L-methionine + 2 oxidized [2Fe-2S]-[ferredoxin] + S-adenosyl-L-homocysteine. Specifically methylates position 2 of adenine 2503 in 23S rRNA and position 2 of adenine 37 in tRNAs. The protein is Probable dual-specificity RNA methyltransferase RlmN of Christiangramia forsetii (strain DSM 17595 / CGMCC 1.15422 / KT0803) (Gramella forsetii).